The sequence spans 204 residues: Hydrophilin YNL190W (204 aa).

Positions 1–20 (MKFSSVTAITLATVATVATA) are cleaved as a signal peptide. Low complexity predominate over residues 35–46 (SDGSLTTTTSTH). The interval 35 to 179 (SDGSLTTTTS…ARKNNAAPGP (145 aa)) is disordered. The span at 47–59 (TTHKYGKFNKTSK) shows a compositional bias: basic residues. N-linked (GlcNAc...) asparagine glycosylation is found at N55, N64, N75, N84, N95, N104, N115, N124, N135, N144, and N155. Basic residues predominate over residues 67-79 (GTHKYGKFNKTSK). Residues 87–99 (GTHKYGKFNKTSK) show a composition bias toward basic residues. Positions 107 to 119 (GTHKYGKFNKTSK) are enriched in basic residues. Positions 127–139 (GTHKYGKFNKTSK) are enriched in basic residues. Over residues 147–156 (GTHKYGKFNK) the composition is skewed to basic residues. N174 carries the GPI-anchor amidated asparagine lipid modification. A propeptide spans 175–204 (AAPGPSNFNSIKLFGVTAGSAAVAGALLLL) (removed in mature form).

This sequence belongs to the PGA14 family. Post-translationally, the GPI-anchor is attached to the protein in the endoplasmic reticulum and serves to target the protein to the cell surface. There, the glucosamine-inositol phospholipid moiety is cleaved off and the GPI-modified mannoprotein is covalently attached via its lipidless GPI glycan remnant to the 1,6-beta-glucan of the outer cell wall layer.

Its subcellular location is the secreted. The protein resides in the cell wall. The protein localises to the membrane. Functionally, hydrophilin which is essential to overcome the simple stress of the desiccation-rehydration process. The polypeptide is Hydrophilin YNL190W (Saccharomyces cerevisiae (strain ATCC 204508 / S288c) (Baker's yeast)).